A 169-amino-acid polypeptide reads, in one-letter code: Putative tRNA (cytidine(34)-2'-O)-methyltransferase (169 aa).

V79, G104, I125, and S134 together coordinate S-adenosyl-L-methionine.

Belongs to the class IV-like SAM-binding methyltransferase superfamily. RNA methyltransferase TrmH family. TrmL subfamily.

It localises to the cytoplasm. The catalysed reaction is cytidine(34) in tRNA + S-adenosyl-L-methionine = 2'-O-methylcytidine(34) in tRNA + S-adenosyl-L-homocysteine + H(+). It carries out the reaction 5-carboxymethylaminomethyluridine(34) in tRNA(Leu) + S-adenosyl-L-methionine = 5-carboxymethylaminomethyl-2'-O-methyluridine(34) in tRNA(Leu) + S-adenosyl-L-homocysteine + H(+). Could methylate the ribose at the nucleotide 34 wobble position in tRNA. This is Putative tRNA (cytidine(34)-2'-O)-methyltransferase from Lactococcus lactis subsp. cremoris (strain MG1363).